We begin with the raw amino-acid sequence, 167 residues long: Chorion class CB protein PC404 (167 aa).

The tract at residues 1 to 55 is left arm; that stretch reads IGREAIVGAGLQGPFGGPWPYDALSPFDMPYGPALPAMSCGAGSFGPSSGFAPAA. The segment at 56-126 is central domain; the sequence is AYGGGLAVTS…GDGAVGIVAE (71 aa). Residues 127–167 form a right arm region; that stretch reads TPFASTSVNPAYGYGGAIGGGVPYNSYGPIGYGGCGYNALY.

The protein belongs to the chorion protein family.

Functionally, this protein is one of many from the eggshell of the silk moth. This Antheraea polyphemus (Polyphemus moth) protein is Chorion class CB protein PC404.